A 428-amino-acid polypeptide reads, in one-letter code: Divergent protein kinase domain 1A (428 aa).

At 1 to 27 (MARSLCAGAWLRKPHYLQARLSYMRVK) the chain is on the cytoplasmic side. A helical membrane pass occupies residues 28 to 48 (YLFFSWLVVFVGSWIIYVQYS). Over 49 to 428 (TYTELCRGKD…WKKISYTNDS (380 aa)) the chain is Lumenal.

It belongs to the DIPK family. In terms of processing, among the many cysteines in the lumenal domain, most are probably involved in disulfide bonds. Ubiquitous.

The protein localises to the endoplasmic reticulum membrane. The polypeptide is Divergent protein kinase domain 1A (Dipk1a) (Mus musculus (Mouse)).